Here is a 113-residue protein sequence, read N- to C-terminus: Hydrogenase maturation factor HypA (113 aa).

His2 contributes to the Ni(2+) binding site. Zn(2+)-binding residues include Cys73, Cys76, Cys89, and Cys92.

Belongs to the HypA/HybF family.

In terms of biological role, involved in the maturation of [NiFe] hydrogenases. Required for nickel insertion into the metal center of the hydrogenase. The chain is Hydrogenase maturation factor HypA from Aeromonas hydrophila subsp. hydrophila (strain ATCC 7966 / DSM 30187 / BCRC 13018 / CCUG 14551 / JCM 1027 / KCTC 2358 / NCIMB 9240 / NCTC 8049).